The primary structure comprises 70 residues: MGKVTGIAGRFGARYGSSVRKKWKEIMEKRYQDHQCPVCKTTGKVVRIASGVWYCKKCGAKWAGLAYTPY.

Residues Cys-36, Cys-39, Cys-55, and Cys-58 each coordinate Zn(2+). The segment at 36–58 (CPVCKTTGKVVRIASGVWYCKKC) adopts a C4-type zinc-finger fold.

It belongs to the eukaryotic ribosomal protein eL43 family. Putative zinc-binding subfamily. Part of the 50S ribosomal subunit. Zn(2+) serves as cofactor.

In terms of biological role, binds to the 23S rRNA. The sequence is that of Large ribosomal subunit protein eL43 from Sulfurisphaera tokodaii (strain DSM 16993 / JCM 10545 / NBRC 100140 / 7) (Sulfolobus tokodaii).